Consider the following 437-residue polypeptide: Protein translocase subunit SecY (437 aa).

The next 10 membrane-spanning stretches (helical) occupy residues 19 to 39, 69 to 89, 122 to 142, 157 to 177, 189 to 209, 219 to 239, 275 to 295, 318 to 338, 378 to 398, and 400 to 420; these read LFTL…IPGV, LLQI…SIIL, VALA…GALF, IFTT…VMWL, GMSI…LWAI, WIEF…VVFV, GVIP…IVQF, HIIL…AISF, GSLY…GFGA, and QNFP…LETV.

The protein belongs to the SecY/SEC61-alpha family. Component of the Sec protein translocase complex. Heterotrimer consisting of SecY, SecE and SecG subunits. The heterotrimers can form oligomers, although 1 heterotrimer is thought to be able to translocate proteins. Interacts with the ribosome. Interacts with SecDF, and other proteins may be involved. Interacts with SecA.

The protein resides in the cell membrane. Its function is as follows. The central subunit of the protein translocation channel SecYEG. Consists of two halves formed by TMs 1-5 and 6-10. These two domains form a lateral gate at the front which open onto the bilayer between TMs 2 and 7, and are clamped together by SecE at the back. The channel is closed by both a pore ring composed of hydrophobic SecY resides and a short helix (helix 2A) on the extracellular side of the membrane which forms a plug. The plug probably moves laterally to allow the channel to open. The ring and the pore may move independently. The protein is Protein translocase subunit SecY of Streptomyces coelicolor (strain ATCC BAA-471 / A3(2) / M145).